A 227-amino-acid polypeptide reads, in one-letter code: MAYPFQLGLQDATSPIMEELMNFHDHTLMIVFLISSLVLYIISLMLTTKLTHTSTMDAQEVETIWTILPAAILILIALPSLRILYMMDEINNPALTVKTMGHQWYWSYEYTDYEDLCFDSYMIPTNDLKPGELRLLEVDNRVVLPMELPIRMLISSEDVLHSWAVPSLGLKTDAIPGRLNQATVSSNRPGLFYGQCSEICGSNHSFMPIVLEMVPLKYFENWSASMI.

Topologically, residues 1–14 are mitochondrial intermembrane; the sequence is MAYPFQLGLQDATS. The chain crosses the membrane as a helical span at residues 15 to 45; it reads PIMEELMNFHDHTLMIVFLISSLVLYIISLM. Residues 46–59 are Mitochondrial matrix-facing; that stretch reads LTTKLTHTSTMDAQ. Residues 60–87 traverse the membrane as a helical segment; sequence EVETIWTILPAAILILIALPSLRILYMM. Residues 88-227 are Mitochondrial intermembrane-facing; it reads DEINNPALTV…YFENWSASMI (140 aa). The Cu cation site is built by H161, C196, E198, C200, H204, and M207. E198 serves as a coordination point for Mg(2+). Phosphotyrosine is present on Y218.

The protein belongs to the cytochrome c oxidase subunit 2 family. In terms of assembly, component of the cytochrome c oxidase (complex IV, CIV), a multisubunit enzyme composed of 14 subunits. The complex is composed of a catalytic core of 3 subunits MT-CO1, MT-CO2 and MT-CO3, encoded in the mitochondrial DNA, and 11 supernumerary subunits COX4I, COX5A, COX5B, COX6A, COX6B, COX6C, COX7A, COX7B, COX7C, COX8 and NDUFA4, which are encoded in the nuclear genome. The complex exists as a monomer or a dimer and forms supercomplexes (SCs) in the inner mitochondrial membrane with NADH-ubiquinone oxidoreductase (complex I, CI) and ubiquinol-cytochrome c oxidoreductase (cytochrome b-c1 complex, complex III, CIII), resulting in different assemblies (supercomplex SCI(1)III(2)IV(1) and megacomplex MCI(2)III(2)IV(2)). Found in a complex with TMEM177, COA6, COX18, COX20, SCO1 and SCO2. Interacts with TMEM177 in a COX20-dependent manner. Interacts with COX20. Interacts with COX16. Requires Cu cation as cofactor.

The protein resides in the mitochondrion inner membrane. The catalysed reaction is 4 Fe(II)-[cytochrome c] + O2 + 8 H(+)(in) = 4 Fe(III)-[cytochrome c] + 2 H2O + 4 H(+)(out). Functionally, component of the cytochrome c oxidase, the last enzyme in the mitochondrial electron transport chain which drives oxidative phosphorylation. The respiratory chain contains 3 multisubunit complexes succinate dehydrogenase (complex II, CII), ubiquinol-cytochrome c oxidoreductase (cytochrome b-c1 complex, complex III, CIII) and cytochrome c oxidase (complex IV, CIV), that cooperate to transfer electrons derived from NADH and succinate to molecular oxygen, creating an electrochemical gradient over the inner membrane that drives transmembrane transport and the ATP synthase. Cytochrome c oxidase is the component of the respiratory chain that catalyzes the reduction of oxygen to water. Electrons originating from reduced cytochrome c in the intermembrane space (IMS) are transferred via the dinuclear copper A center (CU(A)) of subunit 2 and heme A of subunit 1 to the active site in subunit 1, a binuclear center (BNC) formed by heme A3 and copper B (CU(B)). The BNC reduces molecular oxygen to 2 water molecules using 4 electrons from cytochrome c in the IMS and 4 protons from the mitochondrial matrix. The chain is Cytochrome c oxidase subunit 2 (MT-CO2) from Lemniscomys barbarus (Barbary striped grass mouse).